We begin with the raw amino-acid sequence, 258 residues long: Isoprenyl transferase (258 aa).

Asp38 is an active-site residue. Asp38 provides a ligand contact to Mg(2+). Residues 39 to 42, Trp43, Arg51, His55, and 83 to 85 contribute to the substrate site; these read GNGR and STE. Asn86 acts as the Proton acceptor in catalysis. Substrate contacts are provided by residues Trp87, Arg89, Arg206, and 212–214; that span reads RIS. Mg(2+) is bound at residue Glu225.

The protein belongs to the UPP synthase family. Homodimer. The cofactor is Mg(2+).

In terms of biological role, catalyzes the condensation of isopentenyl diphosphate (IPP) with allylic pyrophosphates generating different type of terpenoids. The protein is Isoprenyl transferase of Bacillus anthracis.